Consider the following 292-residue polypeptide: Triplex capsid protein 2 (292 aa).

This sequence belongs to the herpesviridae TRX2 protein family. As to quaternary structure, interacts with TRX1 and major capisd protein/MCP.

The protein localises to the virion. It is found in the host nucleus. In terms of biological role, structural component of the T=16 icosahedral capsid. The capsid is composed of pentamers and hexamers of major capsid protein/MCP, which are linked together by heterotrimers called triplexes. These triplexes are formed by a single molecule of triplex protein 1/TRX1 and two copies of triplex protein 2/TRX2. Additionally, TRX1 is required for efficient transport of TRX2 to the nucleus, which is the site of capsid assembly. This is Triplex capsid protein 2 from Elephas maximus (Indian elephant).